The primary structure comprises 2057 residues: Myosin heavy chain, non-muscle (2057 aa).

The region spanning 78–128 (HRSVLVWVPHENQGFVAASIKREHGDEVEVELAETGKRVMILRDDIQKMNP) is the Myosin N-terminal SH3-like domain. In terms of domain architecture, Myosin motor spans 132-867 (DKVEDMAELT…VLAHLEEERD (736 aa)). Residue 225-232 (GESGAGKT) participates in ATP binding. The segment at 250–260 (PKGSGAVPHPA) is 25 kDa/50 kDa junction. The interval 722 to 734 (DTQFGARTRKGMF) is 50 kDa/20 kDa junction. Positions 745-767 (LAKLMDTLRNTNPNFVRCIIPNH) are actin-binding. A reactive sulfhydryl/actin-binding region spans residues 782–798 (QLRCNGVLEGIRICRQG). The 30-residue stretch at 870 to 899 (ISDLIVNFQAFCRGFLARRNYQKRLQQLNA) folds into the IQ domain. The stretch at 926–2016 (KPLLEVTKQE…SLKTKLRRTG (1091 aa)) forms a coiled coil. Disordered stretches follow at residues 1124–1144 (EERL…KRKI), 1782–1802 (SSER…EEIA), and 2008–2057 (LKTK…DSAN). The segment at 1343 to 2010 (SQIAELQVKL…MNREINSLKT (668 aa)) is alpha-helical tailpiece (LMM). The interval 1343 to 2057 (SQIAELQVKL…ESLDGEDSAN (715 aa)) is light meromyosin (LMM). Basic and acidic residues predominate over residues 1782 to 1792 (SSERARRAAET). A globular tailpiece region spans residues 2011–2057 (KLRRTGGIGLSSSRLTGTPSSKRAGGGGGSDDSSVQDESLDGEDSAN). Phosphoserine is present on residues serine 2021 and serine 2022. Residues 2044 to 2057 (SVQDESLDGEDSAN) are compositionally biased toward acidic residues.

Belongs to the TRAFAC class myosin-kinesin ATPase superfamily. Myosin family. In terms of assembly, interacts with sau. Interacts with ck and Ubr3. Ubiquitinated. In terms of tissue distribution, in Johnston's organ, expressed in neurons and scolopale cells.

It localises to the cell projection. Its subcellular location is the cilium. The protein localises to the cytoplasm. Its function is as follows. Nonmuscle myosin appears to be responsible for cellularization. Required for morphogenesis and cytokinesis. Necessary for auditory transduction: plays a role in Johnston's organ organization by acting in scolopidial apical attachment. Interaction with the myosin ck may be important for this function. Localizes to and defines the trailing edge of cells during larval epidermal wound healing. This process is dependent on the phosphatidylinositol 4-phosphate 5-kinase sktl/skittles. This chain is Myosin heavy chain, non-muscle (zip), found in Drosophila melanogaster (Fruit fly).